Here is a 295-residue protein sequence, read N- to C-terminus: sn-glycerol-3-phosphate transport system permease protein UgpA (295 aa).

Over 1–11 (MSSSRPVFRSR) the chain is Cytoplasmic. The chain crosses the membrane as a helical span at residues 12–32 (WLPYLLVAPQLIITVIFFIWP). Over 33–80 (AGEALWYSLQSVDPFGFSSQFVGLDNFVALFHDSYYIDSFWTTIKFST) the chain is Periplasmic. The 209-residue stretch at 76–284 (IKFSTFVTVS…FLVIVLTVVQ (209 aa)) folds into the ABC transmembrane type-1 domain. A helical transmembrane segment spans residues 81–101 (FVTVSGLLVSLFFAALVEYIV). The Cytoplasmic segment spans residues 102–109 (RGSRFYQT). Residues 110–130 (LMLLPYAVAPAVAAVLWIFLF) form a helical membrane-spanning segment. Residues 131-156 (NPGRGLITHFLAEFGYDWNHAQNSGQ) lie on the Periplasmic side of the membrane. The chain crosses the membrane as a helical span at residues 157 to 177 (AMFLVVFASVWKQISYNFLFF). The Cytoplasmic portion of the chain corresponds to 178–207 (YAALQSIPRSLIEAAAIDGVGPIRRFFKIA). The chain crosses the membrane as a helical span at residues 208–228 (LPLIAPVSFFLLVVNLVYAFF). At 229–262 (DTFPVIDAATSGGPVQAITTLIYKIYREGFTGLD) the chain is on the periplasmic side. A helical transmembrane segment spans residues 263 to 283 (LASSAAQSVVLMFLVIVLTVV). At 284-295 (QFRYVESKVRYQ) the chain is on the cytoplasmic side.

The protein belongs to the binding-protein-dependent transport system permease family. UgpAE subfamily. In terms of assembly, the complex is composed of two ATP-binding proteins (UgpC), two transmembrane proteins (UgpA and UgpE) and a solute-binding protein (UgpB).

The protein localises to the cell inner membrane. Functionally, part of the ABC transporter complex UgpBAEC involved in sn-glycerol-3-phosphate (G3P) import. Probably responsible for the translocation of the substrate across the membrane. The protein is sn-glycerol-3-phosphate transport system permease protein UgpA (ugpA) of Shigella dysenteriae serotype 1 (strain Sd197).